The chain runs to 194 residues: Mpv17-like protein (194 aa).

The Cytoplasmic segment spans residues methionine 1–arginine 14. A helical transmembrane segment spans residues tyrosine 15–leucine 34. The tract at residues proline 16 to alanine 55 is targeting to peroxisomes. The Lumenal portion of the chain corresponds to glutamine 35–arginine 50. The chain crosses the membrane as a helical span at residues valine 51–leucine 67. Over arginine 68–threonine 91 the chain is Cytoplasmic. A helical membrane pass occupies residues valine 92–glycine 110. Over lysine 111 to threonine 150 the chain is Lumenal. Residues alanine 151 to glutamine 168 traverse the membrane as a helical segment. The Cytoplasmic portion of the chain corresponds to glutamine 169 to lysine 194.

Belongs to the peroxisomal membrane protein PXMP2/4 family. As to expression, isoform 1 and isoform 3 are expressed in the kidney (at protein level). Isoform 1 is expressed in the kidney, spleen, heart, brain, lung and liver. Isoform 3 is expressed in the kidney. Isoform 1 and isoform 3 expression increase during development, reache their highest level in adulthood and decrease with aging.

Its subcellular location is the peroxisome membrane. The protein localises to the cytoplasm. Its function is as follows. Participates in reactive oxygen species metabolism by up- or down-regulation of the genes of antioxidant enzymes. Protective against the mitochondrial apoptotic cascade. Participates in reactive oxygen species metabolism by up- or down-regulation of the genes of antioxidant enzymes. This is Mpv17-like protein (Mpv17l) from Mus musculus (Mouse).